Reading from the N-terminus, the 418-residue chain is Enolase (418 aa).

Gln162 contacts (2R)-2-phosphoglycerate. Residue Glu204 is the Proton donor of the active site. Residues Asp241, Glu283, and Asp309 each coordinate Mg(2+). (2R)-2-phosphoglycerate contacts are provided by Lys334, Arg363, Ser364, and Lys385. Residue Lys334 is the Proton acceptor of the active site.

The protein belongs to the enolase family. The cofactor is Mg(2+).

The protein localises to the cytoplasm. It is found in the secreted. The protein resides in the cell surface. It catalyses the reaction (2R)-2-phosphoglycerate = phosphoenolpyruvate + H2O. The protein operates within carbohydrate degradation; glycolysis; pyruvate from D-glyceraldehyde 3-phosphate: step 4/5. Its function is as follows. Catalyzes the reversible conversion of 2-phosphoglycerate (2-PG) into phosphoenolpyruvate (PEP). It is essential for the degradation of carbohydrates via glycolysis. The polypeptide is Enolase (Pelagibacter ubique (strain HTCC1062)).